A 111-amino-acid chain; its full sequence is Ribonuclease P protein component (111 aa).

Belongs to the RnpA family. As to quaternary structure, consists of a catalytic RNA component (M1 or rnpB) and a protein subunit.

The catalysed reaction is Endonucleolytic cleavage of RNA, removing 5'-extranucleotides from tRNA precursor.. In terms of biological role, RNaseP catalyzes the removal of the 5'-leader sequence from pre-tRNA to produce the mature 5'-terminus. It can also cleave other RNA substrates such as 4.5S RNA. The protein component plays an auxiliary but essential role in vivo by binding to the 5'-leader sequence and broadening the substrate specificity of the ribozyme. The polypeptide is Ribonuclease P protein component (Borreliella afzelii (strain PKo) (Borrelia afzelii)).